Consider the following 102-residue polypeptide: MSTLCSSIGWRLLVALINSAGVCGSFNDRTPASSGHAFTNAPTPNVKPAVGKITALLTNLNRNGIVLDILELTLDLSCHLVIVYKNKYLVLYPLFEAVPFRR.

This is an uncharacterized protein from Saccharomyces cerevisiae (strain ATCC 204508 / S288c) (Baker's yeast).